The primary structure comprises 123 residues: Glycine cleavage system H protein (123 aa).

The Lipoyl-binding domain occupies Val22–Arg104. Lys63 is modified (N6-lipoyllysine).

The protein belongs to the GcvH family. The glycine cleavage system is composed of four proteins: P, T, L and H. (R)-lipoate is required as a cofactor.

In terms of biological role, the glycine cleavage system catalyzes the degradation of glycine. The H protein shuttles the methylamine group of glycine from the P protein to the T protein. The sequence is that of Glycine cleavage system H protein from Clavibacter sepedonicus (Clavibacter michiganensis subsp. sepedonicus).